The sequence spans 361 residues: Phospho-N-acetylmuramoyl-pentapeptide-transferase (361 aa).

The next 10 helical transmembrane spans lie at 28 to 48 (LAVLVTLSLSFLIGPRLIKFL), 74 to 94 (TMGGIMIILSSCFSTLLLADL), 99 to 119 (IWITLFGFVSFGIIGFLDDYA), 135 to 155 (LLLQGIISLIVCILLEYTIDS), 167 to 187 (SLSMDLGYLYIFFAIFVIVGA), 203 to 223 (VPIALTAGSFALISYLVGNLI), 236 to 256 (TGELTIFCASIVGSCLGFLWF), 263 to 283 (VFMGDTGSLSLGGVLGIISVI), 288 to 308 (IVLGIVGGLFVIETISVIMQV), and 338 to 358 (KVVIRFWIISLIFVLIGLSSL).

This sequence belongs to the glycosyltransferase 4 family. MraY subfamily. It depends on Mg(2+) as a cofactor.

The protein localises to the cell inner membrane. It carries out the reaction UDP-N-acetyl-alpha-D-muramoyl-L-alanyl-gamma-D-glutamyl-meso-2,6-diaminopimeloyl-D-alanyl-D-alanine + di-trans,octa-cis-undecaprenyl phosphate = di-trans,octa-cis-undecaprenyl diphospho-N-acetyl-alpha-D-muramoyl-L-alanyl-D-glutamyl-meso-2,6-diaminopimeloyl-D-alanyl-D-alanine + UMP. It participates in cell wall biogenesis; peptidoglycan biosynthesis. Catalyzes the initial step of the lipid cycle reactions in the biosynthesis of the cell wall peptidoglycan: transfers peptidoglycan precursor phospho-MurNAc-pentapeptide from UDP-MurNAc-pentapeptide onto the lipid carrier undecaprenyl phosphate, yielding undecaprenyl-pyrophosphoryl-MurNAc-pentapeptide, known as lipid I. The polypeptide is Phospho-N-acetylmuramoyl-pentapeptide-transferase (Rickettsia bellii (strain RML369-C)).